Consider the following 337-residue polypeptide: Fructose-1,6-bisphosphatase class 1 (337 aa).

Residues Glu94, Asp116, Leu118, and Asp119 each contribute to the Mg(2+) site. Substrate-binding positions include 119–122 (DGSS), Asn210, and Lys276. Mg(2+) is bound at residue Glu282.

This sequence belongs to the FBPase class 1 family. As to quaternary structure, homotetramer. It depends on Mg(2+) as a cofactor.

Its subcellular location is the cytoplasm. The catalysed reaction is beta-D-fructose 1,6-bisphosphate + H2O = beta-D-fructose 6-phosphate + phosphate. It participates in carbohydrate biosynthesis; gluconeogenesis. This chain is Fructose-1,6-bisphosphatase class 1, found in Burkholderia vietnamiensis (strain G4 / LMG 22486) (Burkholderia cepacia (strain R1808)).